The following is a 462-amino-acid chain: L-seryl-tRNA(Sec) selenium transferase (462 aa).

N6-(pyridoxal phosphate)lysine is present on Lys292.

Belongs to the SelA family. It depends on pyridoxal 5'-phosphate as a cofactor.

Its subcellular location is the cytoplasm. It carries out the reaction L-seryl-tRNA(Sec) + selenophosphate + H(+) = L-selenocysteinyl-tRNA(Sec) + phosphate. Its pathway is aminoacyl-tRNA biosynthesis; selenocysteinyl-tRNA(Sec) biosynthesis; selenocysteinyl-tRNA(Sec) from L-seryl-tRNA(Sec) (bacterial route): step 1/1. Its function is as follows. Converts seryl-tRNA(Sec) to selenocysteinyl-tRNA(Sec) required for selenoprotein biosynthesis. This chain is L-seryl-tRNA(Sec) selenium transferase, found in Geobacter sulfurreducens (strain ATCC 51573 / DSM 12127 / PCA).